A 362-amino-acid chain; its full sequence is Adenosine deaminase (362 aa).

The Zn(2+) site is built by H41 and H43. 43–45 (HLD) contributes to the a purine D-ribonucleoside binding site. The segment at 169-183 (IGETGISEESLRKAA) is gating helix loop; regulates binding affinity for substrates and thus substrate selectivity. G200 is a binding site for a purine D-ribonucleoside. Position 225 (H225) interacts with Zn(2+). A purine D-ribonucleoside contacts are provided by E228, H252, and D309. D309 contacts Zn(2+).

This sequence belongs to the metallo-dependent hydrolases superfamily. Adenosine and AMP deaminases family. Zn(2+) is required as a cofactor.

The enzyme catalyses adenosine + H2O + H(+) = inosine + NH4(+). It functions in the pathway purine metabolism; purine nucleoside salvage. With respect to regulation, inhibited by coformycin but not by methylthiocoformycin (MT-coformycin). In terms of biological role, catalyzes the hydrolytic deamination of adenosine to produce inosine. Unlike other Plasmodium adenosine deaminases, does not catalyze the deamination of 5'-methylthioadenosine (MTA). Plays an essential role in the purine salvage pathway which allows the parasite to use host cell purines for the synthesis of nucleic acids. The sequence is that of Adenosine deaminase from Plasmodium gallinaceum.